Here is a 193-residue protein sequence, read N- to C-terminus: Peptidyl-tRNA hydrolase (193 aa).

TRNA is bound at residue histidine 17. The active-site Proton acceptor is the histidine 22. Residues phenylalanine 68, asparagine 70, and asparagine 116 each contribute to the tRNA site.

Belongs to the PTH family. Monomer.

Its subcellular location is the cytoplasm. The enzyme catalyses an N-acyl-L-alpha-aminoacyl-tRNA + H2O = an N-acyl-L-amino acid + a tRNA + H(+). In terms of biological role, hydrolyzes ribosome-free peptidyl-tRNAs (with 1 or more amino acids incorporated), which drop off the ribosome during protein synthesis, or as a result of ribosome stalling. Catalyzes the release of premature peptidyl moieties from peptidyl-tRNA molecules trapped in stalled 50S ribosomal subunits, and thus maintains levels of free tRNAs and 50S ribosomes. The sequence is that of Peptidyl-tRNA hydrolase from Xanthomonas euvesicatoria pv. vesicatoria (strain 85-10) (Xanthomonas campestris pv. vesicatoria).